The primary structure comprises 369 residues: Peptide chain release factor 1 (369 aa).

N5-methylglutamine is present on Gln-238.

The protein belongs to the prokaryotic/mitochondrial release factor family. In terms of processing, methylated by PrmC. Methylation increases the termination efficiency of RF1.

Its subcellular location is the cytoplasm. Peptide chain release factor 1 directs the termination of translation in response to the peptide chain termination codons UAG and UAA. This is Peptide chain release factor 1 from Parabacteroides distasonis (strain ATCC 8503 / DSM 20701 / CIP 104284 / JCM 5825 / NCTC 11152).